Reading from the N-terminus, the 467-residue chain is Proton extrusion protein PxcA (467 aa).

Residues 183–205 (TSPPQLIRPRTEQNKKPRGKADT) form a disordered region. The segment covering 191 to 203 (PRTEQNKKPRGKA) has biased composition (basic and acidic residues). 4 helical membrane passes run 249-269 (FILLLIIVPLLTHQLSKALIV), 352-372 (IFSVGAFIWLLLVSKPSIMVL), 391-411 (IIILFTDVFVGFHSPHGWEVI), and 427-447 (FIFLFIATFPVILDTIFKYWI).

This sequence belongs to the CemA family.

The protein resides in the cell inner membrane. Its function is as follows. Required for H(+) efflux immediately after light irradiation to form a rapid H(+) concentration gradient across the thylakoid membranes. Together with PxcL, contributes to transient H(+) uptake following dark to light transition. The polypeptide is Proton extrusion protein PxcA (Trichormus variabilis (strain ATCC 29413 / PCC 7937) (Anabaena variabilis)).